The sequence spans 288 residues: Pyridoxal kinase PdxY (288 aa).

Residues S9 and 44–45 (TQ) contribute to the substrate site. Residues D111, E148, and K181 each contribute to the ATP site. D224 is a binding site for substrate.

The protein belongs to the pyridoxine kinase family. PdxY subfamily. Homodimer. It depends on Mg(2+) as a cofactor.

The catalysed reaction is pyridoxal + ATP = pyridoxal 5'-phosphate + ADP + H(+). It participates in cofactor metabolism; pyridoxal 5'-phosphate salvage; pyridoxal 5'-phosphate from pyridoxal: step 1/1. Pyridoxal kinase involved in the salvage pathway of pyridoxal 5'-phosphate (PLP). Catalyzes the phosphorylation of pyridoxal to PLP. This chain is Pyridoxal kinase PdxY, found in Haemophilus influenzae (strain PittEE).